Consider the following 910-residue polypeptide: E3 ubiquitin-protein ligase MARCHF6 (910 aa).

M1 is modified (N-acetylmethionine). The RING-CH-type zinc-finger motif lies at 1–62; sequence MDTAEEDICR…ELCKHRFAFT (62 aa). Residues 1–91 lie on the Cytoplasmic side of the membrane; sequence MDTAEEDICR…LVTSIGTAIR (91 aa). 8 residues coordinate Zn(2+): C9, C12, C26, C28, H36, C39, C52, and C55. The helical transmembrane segment at 92-112 threads the bilayer; it reads YWFHYTLVAFAWLGVVPLTAC. The Extracellular portion of the chain corresponds to 113 to 142; it reads RIYKCLFTGSVSSLLTLPLDMLSTENLLAD. The chain crosses the membrane as a helical span at residues 143–163; that stretch reads CLQGCFVVTCTLCAFISLVWL. The Cytoplasmic portion of the chain corresponds to 164-283; it reads REQIVHGGAP…WERMLGLDGS (120 aa). The segment at 185 to 256 is disordered; that stretch reads AAGHHQNEAP…AADANNGAQD (72 aa). The span at 223 to 248 shows a compositional bias: acidic residues; sequence DAQDDQAEEEEEDNEEEDDAGVEDAA. The helical transmembrane segment at 284-304 threads the bilayer; the sequence is LVFLEHVFWVVSLNTLFILVF. Over 305 to 336 the chain is Extracellular; the sequence is AFCPYHIGHFSLVGLGFEEHVQASHFEGLITT. Residues 337 to 357 form a helical membrane-spanning segment; it reads IVGYILLAITLIICHGLATLV. The Cytoplasmic segment spans residues 358–376; the sequence is KFHRSRRLLGVCYIVVKVS. A helical membrane pass occupies residues 377–397; sequence LLVVVEIGVFPLICGWWLDIC. Over 398–421 the chain is Extracellular; it reads SLEMFDATLKDRELSFQSAPGTTM. Residues 422-442 form a helical membrane-spanning segment; it reads FLHWLVGMVYVFYFASFILLL. At 443–480 the chain is on the cytoplasmic side; the sequence is REVLRPGVLWFLRNLNDPDFNPVQEMIHLPIYRHLRRF. Residues 481 to 501 form a helical membrane-spanning segment; sequence ILSVIVFGSIVLLMLWLPIRI. Residues 502-519 are Extracellular-facing; sequence IKSVLPNFLPYNVMLYSD. Residues 520–540 form a helical membrane-spanning segment; it reads APVSELSLELLLLQVVLPALL. Residues 541-632 are Cytoplasmic-facing; the sequence is EQGHTRQWLK…YRRPLNFPLR (92 aa). Residues 633-653 form a helical membrane-spanning segment; that stretch reads IFLLIVFMCITLLIASLICLT. The Extracellular segment spans residues 654–678; that stretch reads LPVFAGRWLMSFWTGTAKIHELYTA. Residues 679 to 699 traverse the membrane as a helical segment; sequence ACGLYVCWLTIRAVTVMVAWM. Topologically, residues 700-721 are cytoplasmic; that stretch reads PQGRRVIFQKVKEWSLMIMKTL. A helical membrane pass occupies residues 722-742; it reads IVAVLLAGVVPLLLGLLFELV. The Extracellular portion of the chain corresponds to 743–764; sequence IVAPLRVPLDQTPLFYPWQDWA. A helical membrane pass occupies residues 765-785; that stretch reads LGVLHAKIIAAITLMGPQWWL. Residues 786–815 are Cytoplasmic-facing; it reads KTVIEQVYANGIRNIDLHYIVRKLAAPVIS. Residues 816-836 traverse the membrane as a helical segment; it reads VLLLSLCVPYVIASGVVPLLG. At 837–848 the chain is on the extracellular side; that stretch reads VTAEMQNLVHRR. The helical transmembrane segment at 849 to 869 threads the bilayer; the sequence is IYPFLLMVVVLMAILSFQVRQ. Topologically, residues 870 to 910 are cytoplasmic; sequence FKRLYEHIKNDKYLVGQRLVNYERKSGKQGSSPPPPQSSQE.

In terms of assembly, interacts with DIO2. Interacts with SQLE. In terms of processing, auto-ubiquitinated, which results in proteasomal degradation. Deubiquitinated by USP19; protecting MARCHF6 from p97-mediated proteasomal degradation. As to expression, present in brain (at protein level).

The protein localises to the endoplasmic reticulum membrane. It carries out the reaction S-ubiquitinyl-[E2 ubiquitin-conjugating enzyme]-L-cysteine + [acceptor protein]-L-lysine = [E2 ubiquitin-conjugating enzyme]-L-cysteine + N(6)-ubiquitinyl-[acceptor protein]-L-lysine.. Its pathway is protein modification; protein ubiquitination. Functionally, endoplasmic reticulum membrane-associated E3 ubiquitin ligase that plays a critical role in mitigating endoplasmic reticulum stress, the regulation of cholesterol and lipid homeostasis, and ferroptosis. Acts as a pivotal component of both the Ac/N-degron pathway (targeting the N-terminal acetyl group of substrates) and the ER-associated protein degradation-cytosol (ERAD-C) pathway (targeting misfolded substrates). For instance, mediates the degradation of Ac/N-degron-bearing proteins such as the G-protein regulator RGS2 and the lipid droplet protein PLIN2. Suppresses endoplasmic reticulum stress and ferroptosis through cytosolic POMC degradation. Prevents ferroptosis by acting as a NADPH sensor during lipid peroxidation through its C-terminal regulatory region. Facilitates also the degradation of selected endoplasmic reticulum proteins by associating with signal peptide peptidase for the turnover of endogenous tail-anchored proteins. Promotes ubiquitination of DIO2, leading to its degradation. By ubiquitinating and thereby modulating the stability of many proteins of the cholesterol pathway including SQLE, CYP51A1, CYP11A1 and HMGCR, acts as a crucial post-translational regulator of cholesterol synthesis. In Homo sapiens (Human), this protein is E3 ubiquitin-protein ligase MARCHF6.